The following is a 158-amino-acid chain: UPF0758 protein YkfG (158 aa).

One can recognise an MPN domain in the interval 36 to 158; that stretch reads AFTSTHAVRE…IYSFAEHGLL (123 aa). 3 residues coordinate Zn(2+): His-107, His-109, and Asp-120. The short motif at 107–120 is the JAMM motif element; that stretch reads HNHPSGETTPSQAD.

The protein belongs to the UPF0758 family.

The protein is UPF0758 protein YkfG (ykfG) of Escherichia coli (strain K12).